The following is a 335-amino-acid chain: Nucleoid-associated protein YejK (335 aa).

The protein belongs to the YejK family.

Its subcellular location is the cytoplasm. It is found in the nucleoid. This Shigella dysenteriae serotype 1 (strain Sd197) protein is Nucleoid-associated protein YejK.